The primary structure comprises 258 residues: UPF0246 protein CGSHiGG_08495 (258 aa).

The protein belongs to the UPF0246 family.

This chain is UPF0246 protein CGSHiGG_08495, found in Haemophilus influenzae (strain PittGG).